A 174-amino-acid chain; its full sequence is Large ribosomal subunit protein uL13 (174 aa).

2 disordered regions span residues 1-22 and 153-174; these read MAFPDTDVSPPRGGPSSPAKSP and GETHPHSAQKPQVLKTQPLEVK.

It belongs to the universal ribosomal protein uL13 family. As to quaternary structure, part of the 50S ribosomal subunit. Contacts proteins L3 and L20.

This protein is one of the early assembly proteins of the 50S ribosomal subunit. Binds to the 23S rRNA. The chain is Large ribosomal subunit protein uL13 (rplM) from Deinococcus radiodurans (strain ATCC 13939 / DSM 20539 / JCM 16871 / CCUG 27074 / LMG 4051 / NBRC 15346 / NCIMB 9279 / VKM B-1422 / R1).